Reading from the N-terminus, the 40-residue chain is Trypsin inhibitor (40 aa).

As to quaternary structure, monomer.

The catalysed reaction is Preferential cleavage: Arg-|-Xaa, Lys-|-Xaa.. Its function is as follows. Inhibits trypsin but not chymotrypsin, papain or porcine pancreatic alpha-amylase. Has insecticidal activity against A.aegypti. Functions by inhibiting the A.aegypti midgut proteases to reduce the survival of larva and adults. The chain is Trypsin inhibitor from Cassia leiandra (Marimari).